Reading from the N-terminus, the 269-residue chain is MSGIDAKKIRTRHFREAKVNGQKVSVLTSYDALSARIFDEAGVDMLLVGDSAANVVLGRDTTLSITLDEMIVLAKAVTIATKRALVVVDLPFGTYEVSPNQAVESAIRVMRETGAAAVKIEGGVEIAQTIRRIVDAGIPVVGHIGYTPQSEHSLGGHVVQGRGASSGKLIADARALEQAGAFAVVLEMVPAEAAREVTEDLSITTIGIGAGNGTDGQVLVWQDAFGLNRGKKPRFVREYATLGDSLHDAAQAYIADIHAGTFPGEAESF.

The Mg(2+) site is built by Asp50 and Asp89. Residues 50 to 51 (DS), Asp89, and Lys119 contribute to the 3-methyl-2-oxobutanoate site. Glu121 is a Mg(2+) binding site. Catalysis depends on Glu187, which acts as the Proton acceptor.

This sequence belongs to the PanB family. In terms of assembly, homodecamer; pentamer of dimers. Requires Mg(2+) as cofactor.

The protein resides in the cytoplasm. The catalysed reaction is 3-methyl-2-oxobutanoate + (6R)-5,10-methylene-5,6,7,8-tetrahydrofolate + H2O = 2-dehydropantoate + (6S)-5,6,7,8-tetrahydrofolate. It participates in cofactor biosynthesis; (R)-pantothenate biosynthesis; (R)-pantoate from 3-methyl-2-oxobutanoate: step 1/2. In terms of biological role, catalyzes the reversible reaction in which hydroxymethyl group from 5,10-methylenetetrahydrofolate is transferred onto alpha-ketoisovalerate to form ketopantoate. The polypeptide is 3-methyl-2-oxobutanoate hydroxymethyltransferase (panB) (Corynebacterium glutamicum (strain ATCC 13032 / DSM 20300 / JCM 1318 / BCRC 11384 / CCUG 27702 / LMG 3730 / NBRC 12168 / NCIMB 10025 / NRRL B-2784 / 534)).